A 91-amino-acid chain; its full sequence is YcgL domain-containing protein Sde_1339 (91 aa).

The YcgL domain maps to methionine 1–proline 85. A disordered region spans residues glutamine 72–arginine 91.

This chain is YcgL domain-containing protein Sde_1339, found in Saccharophagus degradans (strain 2-40 / ATCC 43961 / DSM 17024).